Reading from the N-terminus, the 159-residue chain is NADH-quinone oxidoreductase subunit B (159 aa).

Residues C37, C38, C102, and C132 each coordinate [4Fe-4S] cluster.

It belongs to the complex I 20 kDa subunit family. As to quaternary structure, NDH-1 is composed of 14 different subunits. Subunits NuoB, C, D, E, F, and G constitute the peripheral sector of the complex. The cofactor is [4Fe-4S] cluster.

Its subcellular location is the cell inner membrane. It catalyses the reaction a quinone + NADH + 5 H(+)(in) = a quinol + NAD(+) + 4 H(+)(out). In terms of biological role, NDH-1 shuttles electrons from NADH, via FMN and iron-sulfur (Fe-S) centers, to quinones in the respiratory chain. The immediate electron acceptor for the enzyme in this species is believed to be ubiquinone. Couples the redox reaction to proton translocation (for every two electrons transferred, four hydrogen ions are translocated across the cytoplasmic membrane), and thus conserves the redox energy in a proton gradient. The polypeptide is NADH-quinone oxidoreductase subunit B (Variovorax paradoxus (strain S110)).